The primary structure comprises 191 residues: Adenine phosphoribosyltransferase 5 (191 aa).

Belongs to the purine/pyrimidine phosphoribosyltransferase family. As to quaternary structure, homodimer.

Its subcellular location is the cytoplasm. It carries out the reaction AMP + diphosphate = 5-phospho-alpha-D-ribose 1-diphosphate + adenine. Its pathway is purine metabolism; AMP biosynthesis via salvage pathway; AMP from adenine: step 1/1. Its function is as follows. Catalyzes a salvage reaction resulting in the formation of AMP, that is energically less costly than de novo synthesis. May contribute to the recycling of adenine into adenylate nucleotides and the inactivation of cytokinins by phosphoribosylation. Possesses low activity toward adenine, but can efficiently convert cytokinins from free bases (active form) to the corresponding nucleotides (inactive form). The protein is Adenine phosphoribosyltransferase 5 (APT5) of Arabidopsis thaliana (Mouse-ear cress).